Consider the following 113-residue polypeptide: Putative hemolysin E-like protein (113 aa).

The protein belongs to the hemolysin E family.

This Shigella flexneri protein is Putative hemolysin E-like protein.